We begin with the raw amino-acid sequence, 257 residues long: Probable enoyl-CoA hydratase echA17 (257 aa).

This sequence belongs to the enoyl-CoA hydratase/isomerase family.

It carries out the reaction a (3S)-3-hydroxyacyl-CoA = a (2E)-enoyl-CoA + H2O. The enzyme catalyses a 4-saturated-(3S)-3-hydroxyacyl-CoA = a (3E)-enoyl-CoA + H2O. Functionally, could possibly oxidize fatty acids using specific components. This Mycolicibacterium paratuberculosis (strain ATCC BAA-968 / K-10) (Mycobacterium paratuberculosis) protein is Probable enoyl-CoA hydratase echA17 (echA17).